A 72-amino-acid chain; its full sequence is UPF0346 protein GTNG_1419 (72 aa).

Belongs to the UPF0346 family.

This Geobacillus thermodenitrificans (strain NG80-2) protein is UPF0346 protein GTNG_1419.